The chain runs to 351 residues: Probable E3 ubiquitin-protein ligase sinah (351 aa).

Positions 1–38 (MSVRNSRPQLSWPERVSPQRTIDTPTASGEMLTRRQSA) are disordered. Over residues 18–27 (PQRTIDTPTA) the composition is skewed to polar residues. Residues 106–141 (CPVCFGYIMPPIMQCPRGHLICSTCRSKLTICPVCR) form an RING-type zinc finger. An SBD region spans residues 155–346 (VASKLIFPCK…LALNVVIRKV (192 aa)). The segment at 158–218 (KLIFPCKHSH…VYQHLMSSHE (61 aa)) adopts an SIAH-type zinc-finger fold. Positions 163, 170, 182, 186, 193, 200, 212, and 217 each coordinate Zn(2+).

This sequence belongs to the SINA (Seven in absentia) family. As to quaternary structure, interacts with ebi and phyl.

It carries out the reaction S-ubiquitinyl-[E2 ubiquitin-conjugating enzyme]-L-cysteine + [acceptor protein]-L-lysine = [E2 ubiquitin-conjugating enzyme]-L-cysteine + N(6)-ubiquitinyl-[acceptor protein]-L-lysine.. It functions in the pathway protein modification; protein ubiquitination. E3 ubiquitin-protein ligase that mediates ubiquitination and subsequent proteasomal degradation of target proteins. The adapter phyl is required to direct the degradation of the two isoforms of the transcriptional repressor Tramtrack (Ttk). E3 ubiquitin ligases accept ubiquitin from an E2 ubiquitin-conjugating enzyme in the form of a thioester and then directly transfers the ubiquitin to targeted substrates. It probably triggers the ubiquitin-mediated degradation of different substrates. A phyl-independent mechanism of degradation exists for isoform beta of ttk that involves motifs in the C-terminus of ttk. This is Probable E3 ubiquitin-protein ligase sinah (sinah) from Drosophila melanogaster (Fruit fly).